The following is a 298-amino-acid chain: Golgi to ER traffic protein 2 (298 aa).

Residues 1–164 (MSEPVVDTAE…LEYNTYNQKL (164 aa)) lie on the Cytoplasmic side of the membrane. The disordered stretch occupies residues 40–92 (ILSQGSSVKTSGVKSVLDQEKEATPSHDEDPEIQDITEITTPPPRTPPIGEDA). A compositionally biased stretch (low complexity) spans 42–55 (SQGSSVKTSGVKSV). Residues 56–67 (LDQEKEATPSHD) show a composition bias toward basic and acidic residues. Residues 165-185 (WKFRFLLVRVSVTLFNFFYHY) form a helical membrane-spanning segment. Topologically, residues 186–211 (INLSNFHASNYAYVRDLSSEKYPVRD) are lumenal. A helical membrane pass occupies residues 212-231 (FFTWFATTEVVLVAAYYSIF). Residues 232-275 (HSLGLFHAANQNSFVLKAMSMGSMVLPQLEHYKPLVARFLGYYE) lie on the Cytoplasmic side of the membrane. Residues 276 to 296 (LLGIVLGDLSLVIVLFGLLSF) traverse the membrane as a helical segment. The Lumenal segment spans residues 297–298 (AN).

This sequence belongs to the GET2 family. Component of the Golgi to ER traffic (GET) complex, which is composed of GET1, GET2 and GET3. Within the complex, GET1 and GET2 form a heterotetramer which is stabilized by phosphatidylinositol binding and which binds to the GET3 homodimer.

The protein resides in the endoplasmic reticulum membrane. The protein localises to the golgi apparatus membrane. In terms of biological role, required for the post-translational delivery of tail-anchored (TA) proteins to the endoplasmic reticulum. Together with GET1, acts as a membrane receptor for soluble GET3, which recognizes and selectively binds the transmembrane domain of TA proteins in the cytosol. The GET complex cooperates with the HDEL receptor ERD2 to mediate the ATP-dependent retrieval of resident ER proteins that contain a C-terminal H-D-E-L retention signal from the Golgi to the ER. This is Golgi to ER traffic protein 2 from Candida albicans (strain SC5314 / ATCC MYA-2876) (Yeast).